The sequence spans 673 residues: UvrABC system protein B (673 aa).

One can recognise a Helicase ATP-binding domain in the interval 29–188; the sequence is EGLNDGLAHQ…LAELQYTRND (160 aa). 42-49 contacts ATP; it reads GVTGSGKT. A Beta-hairpin motif is present at residues 95–118; sequence YYDYYQPEAYVPSSDTFIEKDASI. The region spanning 434 to 600 is the Helicase C-terminal domain; it reads QVDDVLSEIH…ALNKKVGELL (167 aa). The interval 607 to 632 is disordered; that stretch reads KPKRGKQAVKVEEKSANTYKPKSRKE. A UVR domain is found at 634–669; the sequence is EKELKQLEQQMRDFAKDLEFEKAAAVRDKIGQLKAV.

Belongs to the UvrB family. Forms a heterotetramer with UvrA during the search for lesions. Interacts with UvrC in an incision complex.

The protein resides in the cytoplasm. In terms of biological role, the UvrABC repair system catalyzes the recognition and processing of DNA lesions. A damage recognition complex composed of 2 UvrA and 2 UvrB subunits scans DNA for abnormalities. Upon binding of the UvrA(2)B(2) complex to a putative damaged site, the DNA wraps around one UvrB monomer. DNA wrap is dependent on ATP binding by UvrB and probably causes local melting of the DNA helix, facilitating insertion of UvrB beta-hairpin between the DNA strands. Then UvrB probes one DNA strand for the presence of a lesion. If a lesion is found the UvrA subunits dissociate and the UvrB-DNA preincision complex is formed. This complex is subsequently bound by UvrC and the second UvrB is released. If no lesion is found, the DNA wraps around the other UvrB subunit that will check the other stand for damage. In Actinobacillus pleuropneumoniae serotype 5b (strain L20), this protein is UvrABC system protein B.